The following is a 434-amino-acid chain: UDP-N-acetylmuramoylalanine--D-glutamate ligase (434 aa).

G126 to T132 is a binding site for ATP.

This sequence belongs to the MurCDEF family.

It is found in the cytoplasm. The enzyme catalyses UDP-N-acetyl-alpha-D-muramoyl-L-alanine + D-glutamate + ATP = UDP-N-acetyl-alpha-D-muramoyl-L-alanyl-D-glutamate + ADP + phosphate + H(+). It functions in the pathway cell wall biogenesis; peptidoglycan biosynthesis. Its function is as follows. Cell wall formation. Catalyzes the addition of glutamate to the nucleotide precursor UDP-N-acetylmuramoyl-L-alanine (UMA). This Desulfovibrio desulfuricans (strain ATCC 27774 / DSM 6949 / MB) protein is UDP-N-acetylmuramoylalanine--D-glutamate ligase.